Consider the following 158-residue polypeptide: MQGTLSVWLAKRGLIHRSLGFDYQGIETLQIKPEDWHSIAVILYVYGYNYLRSQCAYDVAPGGLLASVYHLTRIEYGVNPAEEVCIKVFTHRSNPRIPSVFWVWKSTDFQERESYDMLGITYDSHPRLKRILMPESWIGWPLRKDYIAPNFYEIQDAY.

It belongs to the complex I 30 kDa subunit family. In terms of assembly, NDH is composed of at least 16 different subunits, 5 of which are encoded in the nucleus.

It localises to the plastid. Its subcellular location is the chloroplast thylakoid membrane. The catalysed reaction is a plastoquinone + NADH + (n+1) H(+)(in) = a plastoquinol + NAD(+) + n H(+)(out). The enzyme catalyses a plastoquinone + NADPH + (n+1) H(+)(in) = a plastoquinol + NADP(+) + n H(+)(out). NDH shuttles electrons from NAD(P)H:plastoquinone, via FMN and iron-sulfur (Fe-S) centers, to quinones in the photosynthetic chain and possibly in a chloroplast respiratory chain. The immediate electron acceptor for the enzyme in this species is believed to be plastoquinone. Couples the redox reaction to proton translocation, and thus conserves the redox energy in a proton gradient. The sequence is that of NAD(P)H-quinone oxidoreductase subunit J, chloroplastic from Capsella bursa-pastoris (Shepherd's purse).